Consider the following 316-residue polypeptide: Olfactory receptor 2G6 (316 aa).

At 1–25 (MEETNNSSEKGFLLLGFSDQPQLER) the chain is on the extracellular side. N-linked (GlcNAc...) asparagine glycosylation is found at Asn5 and Asn6. The helical transmembrane segment at 26–49 (FLFAIILYFYVLSLLGNTALILVC) threads the bilayer. The Cytoplasmic segment spans residues 50 to 57 (CLDSRLHT). A helical transmembrane segment spans residues 58–79 (PMYFFLSNLSCVDICFTTSVAP). Residues 80 to 100 (QLLVTMNKKDKTMSYGGCVAQ) are Extracellular-facing. Cys97 and Cys189 are joined by a disulfide. The helical transmembrane segment at 101-120 (LYVAMGLGSSECILLAVMAY) threads the bilayer. The Cytoplasmic portion of the chain corresponds to 121-139 (DRYAAVCRPLRYIAIMHPR). A helical transmembrane segment spans residues 140 to 158 (FCASLAGGAWLSGLITSLI). Residues 159–195 (QCSLTVQLPLCGHRTLDHIFCEVPVLIKLACVDTTFN) are Extracellular-facing. The helical transmembrane segment at 196-219 (EAELFVASVVFLIVPVLLILVSYG) threads the bilayer. Residues 220–236 (FITQAVLRIKSAAGRQK) are Cytoplasmic-facing. A helical transmembrane segment spans residues 237–259 (AFGTCSSHLVVVIIFYGTIIFMY). Over 260-272 (LQPANRRSKNQGK) the chain is Extracellular. The helical transmembrane segment at 273 to 292 (FVSLFYTIVTPLLNPIIYTL) threads the bilayer. Residues 293-316 (RNKDVKGALRTLILGSAAGQSHKD) are Cytoplasmic-facing.

This sequence belongs to the G-protein coupled receptor 1 family.

Its subcellular location is the cell membrane. Functionally, odorant receptor. This chain is Olfactory receptor 2G6 (OR2G6), found in Homo sapiens (Human).